The sequence spans 121 residues: Holo-[acyl-carrier-protein] synthase (121 aa).

Asp5 and Glu50 together coordinate Mg(2+).

The protein belongs to the P-Pant transferase superfamily. AcpS family. Mg(2+) is required as a cofactor.

It is found in the cytoplasm. It catalyses the reaction apo-[ACP] + CoA = holo-[ACP] + adenosine 3',5'-bisphosphate + H(+). Functionally, transfers the 4'-phosphopantetheine moiety from coenzyme A to a Ser of acyl-carrier-protein. In Sulfurimonas denitrificans (strain ATCC 33889 / DSM 1251) (Thiomicrospira denitrificans (strain ATCC 33889 / DSM 1251)), this protein is Holo-[acyl-carrier-protein] synthase.